Here is a 25-residue protein sequence, read N- to C-terminus: Caerin-1.17 (25 aa).

L25 is modified (leucine amide).

This sequence belongs to the frog skin active peptide (FSAP) family. Caerin subfamily. In terms of tissue distribution, expressed by the skin dorsal glands.

Its subcellular location is the secreted. Caerin-1.17 shows significant activity against Gram-positive organisms, but is less effective against Gram-negative organisms. The chain is Caerin-1.17 from Ranoidea gracilenta (Dainty green tree frog).